The sequence spans 303 residues: Pyridoxal 5'-phosphate synthase subunit PdxS (303 aa).

Asp33 provides a ligand contact to D-ribose 5-phosphate. The active-site Schiff-base intermediate with D-ribose 5-phosphate is Lys90. Residue Gly162 coordinates D-ribose 5-phosphate. Arg174 contributes to the D-glyceraldehyde 3-phosphate binding site. Residues Gly223 and 244-245 (GS) each bind D-ribose 5-phosphate.

The protein belongs to the PdxS/SNZ family. As to quaternary structure, in the presence of PdxT, forms a dodecamer of heterodimers.

The enzyme catalyses aldehydo-D-ribose 5-phosphate + D-glyceraldehyde 3-phosphate + L-glutamine = pyridoxal 5'-phosphate + L-glutamate + phosphate + 3 H2O + H(+). The protein operates within cofactor biosynthesis; pyridoxal 5'-phosphate biosynthesis. Functionally, catalyzes the formation of pyridoxal 5'-phosphate from ribose 5-phosphate (RBP), glyceraldehyde 3-phosphate (G3P) and ammonia. The ammonia is provided by the PdxT subunit. Can also use ribulose 5-phosphate and dihydroxyacetone phosphate as substrates, resulting from enzyme-catalyzed isomerization of RBP and G3P, respectively. The protein is Pyridoxal 5'-phosphate synthase subunit PdxS of Mycobacterium avium (strain 104).